The primary structure comprises 218 residues: Small ribosomal subunit protein uS5 (218 aa).

Residues 1–10 are compositionally biased toward polar residues; the sequence is MTQATNQTPG. Residues 1 to 63 are disordered; sequence MTQATNQTPG…GRDERDSEWQ (63 aa). Residues 11–25 are compositionally biased toward low complexity; that stretch reads QDVPGAADVPAAAEG. A compositionally biased stretch (basic and acidic residues) spans 31–63; the sequence is GERRGGGGGRGGDRRGRGDRRGRGRDERDSEWQ. An S5 DRBM domain is found at 62–125; sequence WQERVIQIRR…ADGKKHLVKV (64 aa).

This sequence belongs to the universal ribosomal protein uS5 family. Part of the 30S ribosomal subunit. Contacts proteins S4 and S8.

Its function is as follows. With S4 and S12 plays an important role in translational accuracy. Located at the back of the 30S subunit body where it stabilizes the conformation of the head with respect to the body. The sequence is that of Small ribosomal subunit protein uS5 from Synechococcus sp. (strain RCC307).